The chain runs to 255 residues: Imidazole glycerol phosphate synthase subunit HisF (255 aa).

Active-site residues include aspartate 11 and aspartate 130.

The protein belongs to the HisA/HisF family. Heterodimer of HisH and HisF.

It is found in the cytoplasm. It carries out the reaction 5-[(5-phospho-1-deoxy-D-ribulos-1-ylimino)methylamino]-1-(5-phospho-beta-D-ribosyl)imidazole-4-carboxamide + L-glutamine = D-erythro-1-(imidazol-4-yl)glycerol 3-phosphate + 5-amino-1-(5-phospho-beta-D-ribosyl)imidazole-4-carboxamide + L-glutamate + H(+). It participates in amino-acid biosynthesis; L-histidine biosynthesis; L-histidine from 5-phospho-alpha-D-ribose 1-diphosphate: step 5/9. In terms of biological role, IGPS catalyzes the conversion of PRFAR and glutamine to IGP, AICAR and glutamate. The HisF subunit catalyzes the cyclization activity that produces IGP and AICAR from PRFAR using the ammonia provided by the HisH subunit. This is Imidazole glycerol phosphate synthase subunit HisF from Prochlorococcus marinus subsp. pastoris (strain CCMP1986 / NIES-2087 / MED4).